A 232-amino-acid chain; its full sequence is Ubiquinone biosynthesis O-methyltransferase (232 aa).

S-adenosyl-L-methionine contacts are provided by arginine 36, glycine 55, aspartate 76, and leucine 120.

This sequence belongs to the methyltransferase superfamily. UbiG/COQ3 family.

It carries out the reaction a 3-demethylubiquinol + S-adenosyl-L-methionine = a ubiquinol + S-adenosyl-L-homocysteine + H(+). The catalysed reaction is a 3-(all-trans-polyprenyl)benzene-1,2-diol + S-adenosyl-L-methionine = a 2-methoxy-6-(all-trans-polyprenyl)phenol + S-adenosyl-L-homocysteine + H(+). It functions in the pathway cofactor biosynthesis; ubiquinone biosynthesis. Functionally, O-methyltransferase that catalyzes the 2 O-methylation steps in the ubiquinone biosynthetic pathway. The chain is Ubiquinone biosynthesis O-methyltransferase from Dechloromonas aromatica (strain RCB).